The chain runs to 778 residues: Mitochondrial intermediate peptidase (778 aa).

Residues 1 to 37 constitute a mitochondrion transit peptide; sequence MIRTVTRPRQWQRWVYSSCLLQRAVPPAAARQQPRFT. H557 provides a ligand contact to Zn(2+). E558 is a catalytic residue. Positions 561 and 564 each coordinate Zn(2+).

The protein belongs to the peptidase M3 family. Zn(2+) serves as cofactor.

It localises to the mitochondrion matrix. The enzyme catalyses Release of an N-terminal octapeptide as second stage of processing of some proteins imported into the mitochondrion.. Functionally, cleaves proteins, imported into the mitochondrion, to their mature size. While most mitochondrial precursor proteins are processed to the mature form in one step by mitochondrial processing peptidase (MPP), the sequential cleavage by MIP of an octapeptide after initial processing by MPP is a required step for a subgroup of nuclear-encoded precursor proteins destined for the matrix or the inner membrane. The protein is Mitochondrial intermediate peptidase (OCT1) of Chaetomium globosum (strain ATCC 6205 / CBS 148.51 / DSM 1962 / NBRC 6347 / NRRL 1970) (Soil fungus).